A 170-amino-acid chain; its full sequence is Ribosome maturation factor RimM (170 aa).

The region spanning 97-170 (HPDEYYWVDL…RIVVDWDPEF (74 aa)) is the PRC barrel domain.

This sequence belongs to the RimM family. Binds ribosomal protein uS19.

Its subcellular location is the cytoplasm. Functionally, an accessory protein needed during the final step in the assembly of 30S ribosomal subunit, possibly for assembly of the head region. Essential for efficient processing of 16S rRNA. May be needed both before and after RbfA during the maturation of 16S rRNA. It has affinity for free ribosomal 30S subunits but not for 70S ribosomes. The polypeptide is Ribosome maturation factor RimM (Xylella fastidiosa (strain M12)).